The sequence spans 613 residues: Dihydroxy-acid dehydratase (613 aa).

Mg(2+) is bound at residue Asp-81. Position 122 (Cys-122) interacts with [2Fe-2S] cluster. Mg(2+)-binding residues include Asp-123 and Lys-124. At Lys-124 the chain carries N6-carboxylysine. Cys-195 contributes to the [2Fe-2S] cluster binding site. Glu-491 contributes to the Mg(2+) binding site. Catalysis depends on Ser-517, which acts as the Proton acceptor.

It belongs to the IlvD/Edd family. As to quaternary structure, homodimer. Requires [2Fe-2S] cluster as cofactor. The cofactor is Mg(2+).

It carries out the reaction (2R)-2,3-dihydroxy-3-methylbutanoate = 3-methyl-2-oxobutanoate + H2O. The catalysed reaction is (2R,3R)-2,3-dihydroxy-3-methylpentanoate = (S)-3-methyl-2-oxopentanoate + H2O. Its pathway is amino-acid biosynthesis; L-isoleucine biosynthesis; L-isoleucine from 2-oxobutanoate: step 3/4. It functions in the pathway amino-acid biosynthesis; L-valine biosynthesis; L-valine from pyruvate: step 3/4. Its function is as follows. Functions in the biosynthesis of branched-chain amino acids. Catalyzes the dehydration of (2R,3R)-2,3-dihydroxy-3-methylpentanoate (2,3-dihydroxy-3-methylvalerate) into 2-oxo-3-methylpentanoate (2-oxo-3-methylvalerate) and of (2R)-2,3-dihydroxy-3-methylbutanoate (2,3-dihydroxyisovalerate) into 2-oxo-3-methylbutanoate (2-oxoisovalerate), the penultimate precursor to L-isoleucine and L-valine, respectively. The protein is Dihydroxy-acid dehydratase of Aeromonas salmonicida (strain A449).